The primary structure comprises 932 residues: DNA mismatch repair protein MutS (932 aa).

615–622 (GPNMAGKS) lines the ATP pocket.

It belongs to the DNA mismatch repair MutS family.

Its function is as follows. This protein is involved in the repair of mismatches in DNA. It is possible that it carries out the mismatch recognition step. This protein has a weak ATPase activity. This Clostridium botulinum (strain Langeland / NCTC 10281 / Type F) protein is DNA mismatch repair protein MutS.